Consider the following 302-residue polypeptide: Syntaxin-17 (302 aa).

An N-acetylserine modification is found at Ser2. At 2 to 228 the chain is on the cytoplasmic side; the sequence is SEDEEKVKLR…KNLGKAAKYK (227 aa). Lys41 is modified (N6-acetyllysine). Residues 53–123 adopt a coiled-coil conformation; the sequence is EEHINAGRTV…EELKKQFNDE (71 aa). Residue Tyr157 is modified to Phosphotyrosine; by ABL1. Positions 162-224 constitute a t-SNARE coiled-coil homology domain; that stretch reads IPQDQNAAES…EEGTKNLGKA (63 aa). Residues 229–249 form a helical membrane-spanning segment; that stretch reads LAALPVAGALIGGMVGGPIGL. Residues 229 to 275 form a necessary and sufficient for localization to autophagosome region; that stretch reads LAALPVAGALIGGMVGGPIGLLAGFKVAGIAAALGGGVLGFTGGKLI. The Lumenal segment spans residues 250-254; it reads LAGFK. Residues 255-275 traverse the membrane as a helical segment; sequence VAGIAAALGGGVLGFTGGKLI. Over 276–302 the chain is Cytoplasmic; sequence QRKKQKMMEKLTSSCPDLPSQTDKKCS. Ser289 bears the Phosphoserine mark. Residues 299–302 carry the Endoplasmic reticulum retention signal motif; sequence KKCS.

Belongs to the syntaxin family. In terms of assembly, forms a SNARE complex composed of VAMP8, SNAP29 and STX17 involved in fusion of autophagosome with lysosome. Interacts with VAMP7 and VTI1B. Probably interacts with BET1, SCFD1 and SEC22B. Interacts with PTPN2 and ABL1; involved in STX17 phosphorylation. Interacts with COPB1. Interacts with TMED9 and TMED10; the interaction is direct. Interacts with ATG14. Interacts with RUBCNL/PACER; promoting targeting of RUBCNL/PACER to autophagosome. Interacts with VAMP8, SNAP29, VPS39 and VPS41; these interactions are increased in the absence of TMEM39A. Interacts with IRGM; promoting STX17 recruitment to autophagosomes. Interacts with ATG8 proteins GABARAP and MAP1LC3B. Interacts with RNF115; this interaction enhances STX17 stability which in turn promotes autophagosome maturation. Interacts with RAB39A (GTP-bound); the interaction promotes autophagosome-lysosome membrane fusion driven by STX17-SNAP29-VAMP8. Interacts with RAB39B; the interaction may promote a different fonction in autophagy as compared with RAB39A. (Microbial infection) The interactions with VAMP8, SNAP29 and VPS41 are decreased in presence of SARS coronavirus-2/SARS-CoV-2 ORF3A protein. Post-translationally, phosphorylated at Tyr-157 probably by ABL1. Dephosphorylation by PTPN2; regulates exit from the endoplasmic reticulum. (Microbial infection) Cleaved by the L.pneumophila serine protease Lpg1137, impairing endoplasmic reticulum-mitochondria communication, leading to inhibit autophagy.

The protein localises to the endoplasmic reticulum membrane. It is found in the smooth endoplasmic reticulum membrane. Its subcellular location is the endoplasmic reticulum-Golgi intermediate compartment membrane. The protein resides in the cytoplasmic vesicle. It localises to the autophagosome membrane. The protein localises to the COPII-coated vesicle membrane. It is found in the cytoplasm. Its subcellular location is the cytosol. The protein resides in the mitochondrion membrane. It localises to the autolysosome membrane. SNAREs, soluble N-ethylmaleimide-sensitive factor-attachment protein receptors, are essential proteins for fusion of cellular membranes. SNAREs localized on opposing membranes assemble to form a trans-SNARE complex, an extended, parallel four alpha-helical bundle that drives membrane fusion. STX17 is a SNARE of the autophagosome involved in autophagy through the direct control of autophagosome membrane fusion with the lysosome membrane. May also play a role in the early secretory pathway where it may maintain the architecture of the endoplasmic reticulum-Golgi intermediate compartment/ERGIC and Golgi and/or regulate transport between the endoplasmic reticulum, the ERGIC and the Golgi. The polypeptide is Syntaxin-17 (Homo sapiens (Human)).